The chain runs to 542 residues: GATA-type transcription factor sreA (542 aa).

A compositionally biased stretch (polar residues) spans 1–10 (MLTLRSSSDT). The tract at residues 1–172 (MLTLRSSSDT…SAQNASGCGS (172 aa)) is disordered. A compositionally biased stretch (basic and acidic residues) spans 44-63 (ADLRPDSFDASRSPDGDKAS). Low complexity-rich tracts occupy residues 75–117 (SSDQ…PKAS) and 148–168 (SSTS…QNAS). The tract at residues 178 to 196 (CPGGGSCNGTGGAVGCDGC) is cystein-rich region (CRR). Over residues 210-223 (APSARQARASPSAQ) the composition is skewed to low complexity. The segment at 210-248 (APSARQARASPSAQTSEEQAQSGLDALDSASQDASGMPK) is disordered. A GATA-type zinc finger spans residues 250 to 274 (CQNCGTTLTPLWRRDDQGNTICNAC). Over residues 289 to 300 (MKKTVIKRRKRV) the composition is skewed to basic residues. Disordered stretches follow at residues 289–408 (MKKT…PATR) and 461–525 (SNAP…REAE). Polar residues-rich tracts occupy residues 311–320 (AGSSDNSSVS) and 369–387 (KPTQ…NHSP). The span at 396 to 407 (ESTSAESAPPAT) shows a compositional bias: low complexity. Residues 464 to 483 (PARSQTQTQPQPGTRSYSPN) are compositionally biased toward polar residues. A coiled-coil region spans residues 510 to 542 (DKVKAARRAQLQREAENMREALRAKERELASLK).

It localises to the nucleus. Its function is as follows. GATA-type transcription repressor that regulates iron acquisition genes through specific binding the GATA sequence elements of target promoters. SreA targets include genes encoding a number of key iron-regulated factors such as the siderophore biosynthesis genes. Is dispensable for growth on keratin substrates. SreA represses the expression of hapX and the siderophore system during iron sufficient conditions by an iron-sensing mechanism, while hapX represses sreA and activates the siderophore system during iron-limiting conditions resulting in efficient iron uptake and inhibition of iron-consuming pathways. This Arthroderma benhamiae (strain ATCC MYA-4681 / CBS 112371) (Trichophyton mentagrophytes) protein is GATA-type transcription factor sreA.